Consider the following 305-residue polypeptide: UDP-3-O-acyl-N-acetylglucosamine deacetylase (305 aa).

The Zn(2+) site is built by H79, H238, and D242. H265 serves as the catalytic Proton donor.

Belongs to the LpxC family. Requires Zn(2+) as cofactor.

It carries out the reaction a UDP-3-O-[(3R)-3-hydroxyacyl]-N-acetyl-alpha-D-glucosamine + H2O = a UDP-3-O-[(3R)-3-hydroxyacyl]-alpha-D-glucosamine + acetate. The protein operates within glycolipid biosynthesis; lipid IV(A) biosynthesis; lipid IV(A) from (3R)-3-hydroxytetradecanoyl-[acyl-carrier-protein] and UDP-N-acetyl-alpha-D-glucosamine: step 2/6. Catalyzes the hydrolysis of UDP-3-O-myristoyl-N-acetylglucosamine to form UDP-3-O-myristoylglucosamine and acetate, the committed step in lipid A biosynthesis. The sequence is that of UDP-3-O-acyl-N-acetylglucosamine deacetylase from Histophilus somni (strain 129Pt) (Haemophilus somnus).